We begin with the raw amino-acid sequence, 705 residues long: MDTRFHCVYLLTSLDPQCEGDFYIGYTVNPLRRLRQHNGELVNGARRTSRRGRPWTIVCCVSGFPDDRAALKFEWCWQHPTASARLRHAIDILTGLRRLPYAVATLHLLVRASLFCRLDLTLHIFESALLQEAAARAEVLLARRRGAFAVGGGLRASSPRVGTQQHSQRSSSLQGQADGVATPPLPALDSKGELQDASTAAALATTTAASHLLPPLTPSLLFHVEDTTRQAFEDAYLSHDRCLLLPSVGMGVDVGEAGKEGSHMSASAGTSCPYDVSLLSQAARAEWSNASFASDSDDEDTRRFAPYCPSTGSRTPSPQRVHTAASPALLGYRSEERAGDGVLEASPGSSIGCGAALRSFSSPPPPRASSPRSASCPPLYTGINASASLAVDAPHGGVTDACTSSPAAAPAPQPRIPLRFADYGEVDFARAHAEEQHRLHHGLLPCSLCTLPLQPSCVAYCSRAPFCTLRCHLSCLAMWMLYAEAEAAATVDGTDKSPALLSQAPPAPISPLRRLIPSQPCPCPLCGVLLHWGSLVKELKKRVVVERRLHAAQRRIRMEQRWQARLAHIDHTKRSTSAAMRRRQRTRVGAAALAKGAGEAPGAASTVRASTMHVGPARRDAPRVSSPSCLGEPTLTSFAAAASCPSPSTSLAALSPAASASPISRHNGHSNTVTATNTAVAAAAAVSDASLLSLTDFCEEDWLLP.

Residues 4–90 (RFHCVYLLTS…TASARLRHAI (87 aa)) enclose the GIY-YIG domain. Disordered stretches follow at residues 155–192 (RASS…DSKG) and 290–323 (ASFA…RVHT). Composition is skewed to polar residues over residues 160–175 (RVGT…SLQG) and 310–320 (STGSRTPSPQR). The segment at 446–526 (CSLCTLPLQP…PSQPCPCPLC (81 aa)) adopts an SLX1-type zinc-finger fold. The span at 595 to 604 (KGAGEAPGAA) shows a compositional bias: low complexity. Residues 595 to 628 (KGAGEAPGAASTVRASTMHVGPARRDAPRVSSPS) form a disordered region.

Belongs to the SLX1 family. In terms of assembly, forms a heterodimer with a member of the SLX4 family. It depends on a divalent metal cation as a cofactor.

Its subcellular location is the nucleus. Catalytic subunit of a heterodimeric structure-specific endonuclease that resolves DNA secondary structures generated during DNA repair and recombination. Has endonuclease activity towards branched DNA substrates, introducing single-strand cuts in duplex DNA close to junctions with ss-DNA. This chain is Structure-specific endonuclease subunit SLX1 homolog, found in Leishmania infantum.